The chain runs to 144 residues: UPF0735 ACT domain-containing protein NT01CX_1681 (144 aa).

The ACT domain occupies 68 to 143 (TIGFLLSHKA…NVVKVSLIAM (76 aa)).

It belongs to the UPF0735 family.

This Clostridium novyi (strain NT) protein is UPF0735 ACT domain-containing protein NT01CX_1681.